We begin with the raw amino-acid sequence, 465 residues long: Protein DML1 (465 aa).

It belongs to the misato family.

It is found in the mitochondrion. Its function is as follows. Involved in the partitioning of the mitochondrial organelle and mitochondrial DNA (mtDNA) inheritance. This chain is Protein DML1 (DML1), found in Eremothecium gossypii (strain ATCC 10895 / CBS 109.51 / FGSC 9923 / NRRL Y-1056) (Yeast).